The sequence spans 370 residues: Elongation factor Ts, mitochondrial (370 aa).

The N-terminal 29 residues, methionine 1 to leucine 29, are a transit peptide targeting the mitochondrion.

The protein belongs to the EF-Ts family.

Its subcellular location is the mitochondrion. In terms of biological role, associates with the EF-Tu.GDP complex and induces the exchange of GDP to GTP. It remains bound to the aminoacyl-tRNA.EF-Tu.GTP complex up to the GTP hydrolysis stage on the ribosome. This chain is Elongation factor Ts, mitochondrial, found in Cryptococcus neoformans var. neoformans serotype D (strain B-3501A) (Filobasidiella neoformans).